A 582-amino-acid chain; its full sequence is ATP-dependent lipid A-core flippase (582 aa).

Transmembrane regions (helical) follow at residues 16 to 36 (LWPTIAPFKAGLIVAGVALIL), 63 to 83 (VLVWMPLVVIGLMILRGITSY), 153 to 173 (IIGLFIMMFYYSWQLSIILIV), 253 to 273 (PIIQLIASLALAFVLYAASFP), and 275 to 295 (VMDNLTAGTITVVFSSMIALM). In terms of domain architecture, ABC transmembrane type-1 spans 28 to 310 (IVAGVALILN…LTNVNAQFQR (283 aa)). In terms of domain architecture, ABC transporter spans 342 to 578 (VEFRNVTFTY…RGVYAQLHKM (237 aa)). Residue 376 to 383 (GRSGSGKS) participates in ATP binding.

It belongs to the ABC transporter superfamily. Lipid exporter (TC 3.A.1.106) family. Homodimer.

It localises to the cell inner membrane. The enzyme catalyses ATP + H2O + lipid A-core oligosaccharideSide 1 = ADP + phosphate + lipid A-core oligosaccharideSide 2.. Its function is as follows. Involved in lipopolysaccharide (LPS) biosynthesis. Translocates lipid A-core from the inner to the outer leaflet of the inner membrane. Transmembrane domains (TMD) form a pore in the inner membrane and the ATP-binding domain (NBD) is responsible for energy generation. The polypeptide is ATP-dependent lipid A-core flippase (Shigella flexneri).